Reading from the N-terminus, the 331-residue chain is Biotin synthase (331 aa).

Positions 52–277 (PEVEVEGIVS…RTILRYAGGR (226 aa)) constitute a Radical SAM core domain. [4Fe-4S] cluster-binding residues include cysteine 67, cysteine 71, and cysteine 74. Residues cysteine 110, cysteine 202, and arginine 272 each contribute to the [2Fe-2S] cluster site.

The protein belongs to the radical SAM superfamily. Biotin synthase family. In terms of assembly, homodimer. The cofactor is [4Fe-4S] cluster. [2Fe-2S] cluster serves as cofactor.

It carries out the reaction (4R,5S)-dethiobiotin + (sulfur carrier)-SH + 2 reduced [2Fe-2S]-[ferredoxin] + 2 S-adenosyl-L-methionine = (sulfur carrier)-H + biotin + 2 5'-deoxyadenosine + 2 L-methionine + 2 oxidized [2Fe-2S]-[ferredoxin]. Its pathway is cofactor biosynthesis; biotin biosynthesis; biotin from 7,8-diaminononanoate: step 2/2. In terms of biological role, catalyzes the conversion of dethiobiotin (DTB) to biotin by the insertion of a sulfur atom into dethiobiotin via a radical-based mechanism. The protein is Biotin synthase of Salinispora tropica (strain ATCC BAA-916 / DSM 44818 / JCM 13857 / NBRC 105044 / CNB-440).